A 426-amino-acid polypeptide reads, in one-letter code: Mediator of RNA polymerase II transcription subunit 1 (426 aa).

Residues 319–349 form a disordered region; sequence ISTSNSGSVQPKPRRKSSVLSNRRPSMTDSM. The segment covering 336–347 has biased composition (polar residues); sequence SVLSNRRPSMTD.

Belongs to the Mediator complex subunit 1 family. In terms of assembly, component of the Mediator complex.

The protein localises to the nucleus. Functionally, component of the Mediator complex, a coactivator involved in the regulated transcription of nearly all RNA polymerase II-dependent genes. Mediator functions as a bridge to convey information from gene-specific regulatory proteins to the basal RNA polymerase II transcription machinery. Mediator is recruited to promoters by direct interactions with regulatory proteins and serves as a scaffold for the assembly of a functional preinitiation complex with RNA polymerase II and the general transcription factors. In Kluyveromyces lactis (strain ATCC 8585 / CBS 2359 / DSM 70799 / NBRC 1267 / NRRL Y-1140 / WM37) (Yeast), this protein is Mediator of RNA polymerase II transcription subunit 1 (MED1).